The primary structure comprises 39 residues: Cytochrome b559 subunit beta (39 aa).

A helical membrane pass occupies residues 14–30; that stretch reads WLAIHGLAVPTVFSLGS. Heme is bound at residue His-18.

Belongs to the PsbE/PsbF family. In terms of assembly, heterodimer of an alpha subunit and a beta subunit. PSII is composed of 1 copy each of membrane proteins PsbA, PsbB, PsbC, PsbD, PsbE, PsbF, PsbH, PsbI, PsbJ, PsbK, PsbL, PsbM, PsbT, PsbX, PsbY, PsbZ, Psb30/Ycf12, at least 3 peripheral proteins of the oxygen-evolving complex and a large number of cofactors. It forms dimeric complexes. Heme b is required as a cofactor.

It localises to the plastid. Its subcellular location is the chloroplast thylakoid membrane. Its function is as follows. This b-type cytochrome is tightly associated with the reaction center of photosystem II (PSII). PSII is a light-driven water:plastoquinone oxidoreductase that uses light energy to abstract electrons from H(2)O, generating O(2) and a proton gradient subsequently used for ATP formation. It consists of a core antenna complex that captures photons, and an electron transfer chain that converts photonic excitation into a charge separation. The chain is Cytochrome b559 subunit beta from Huperzia lucidula (Shining clubmoss).